Here is a 274-residue protein sequence, read N- to C-terminus: 3-methyl-2-oxobutanoate hydroxymethyltransferase (274 aa).

Positions 44 and 83 each coordinate Mg(2+). 3-methyl-2-oxobutanoate contacts are provided by residues 44-45 (DS), Asp-83, and Lys-113. Glu-115 serves as a coordination point for Mg(2+). The active-site Proton acceptor is Glu-182.

The protein belongs to the PanB family. As to quaternary structure, homodecamer; pentamer of dimers. The cofactor is Mg(2+).

The protein localises to the cytoplasm. It carries out the reaction 3-methyl-2-oxobutanoate + (6R)-5,10-methylene-5,6,7,8-tetrahydrofolate + H2O = 2-dehydropantoate + (6S)-5,6,7,8-tetrahydrofolate. It functions in the pathway cofactor biosynthesis; (R)-pantothenate biosynthesis; (R)-pantoate from 3-methyl-2-oxobutanoate: step 1/2. Its function is as follows. Catalyzes the reversible reaction in which hydroxymethyl group from 5,10-methylenetetrahydrofolate is transferred onto alpha-ketoisovalerate to form ketopantoate. This chain is 3-methyl-2-oxobutanoate hydroxymethyltransferase, found in Campylobacter jejuni subsp. doylei (strain ATCC BAA-1458 / RM4099 / 269.97).